The primary structure comprises 521 residues: Glucose-6-phosphate isomerase (521 aa).

Residue glutamate 327 is the Proton donor of the active site. Active-site residues include histidine 358 and lysine 486.

Belongs to the GPI family.

Its subcellular location is the cytoplasm. The catalysed reaction is alpha-D-glucose 6-phosphate = beta-D-fructose 6-phosphate. The protein operates within carbohydrate biosynthesis; gluconeogenesis. Its pathway is carbohydrate degradation; glycolysis; D-glyceraldehyde 3-phosphate and glycerone phosphate from D-glucose: step 2/4. Its function is as follows. Catalyzes the reversible isomerization of glucose-6-phosphate to fructose-6-phosphate. This Bordetella bronchiseptica (strain ATCC BAA-588 / NCTC 13252 / RB50) (Alcaligenes bronchisepticus) protein is Glucose-6-phosphate isomerase.